The primary structure comprises 416 residues: Probable endo-beta-1,4-glucanase celB (416 aa).

The N-terminal stretch at methionine 1–alanine 17 is a signal peptide. N-linked (GlcNAc...) asparagine glycosylation is found at asparagine 45, asparagine 104, asparagine 117, and asparagine 135. Glutamate 214 acts as the Nucleophile in catalysis. The Proton donor role is filled by glutamate 219. N-linked (GlcNAc...) asparagine glycosylation is found at asparagine 233, asparagine 278, asparagine 292, and asparagine 382.

This sequence belongs to the glycosyl hydrolase 7 (cellulase C) family.

It is found in the secreted. It carries out the reaction Endohydrolysis of (1-&gt;4)-beta-D-glucosidic linkages in cellulose, lichenin and cereal beta-D-glucans.. Has endoglucanase activity on substrates containing beta-1,4 glycosidic bonds, like in carboxymethylcellulose (CMC), hydroxyethylcellulose (HEC) and beta-glucan. Involved in the degradation of complex natural cellulosic substrates. The polypeptide is Probable endo-beta-1,4-glucanase celB (celB) (Aspergillus flavus (strain ATCC 200026 / FGSC A1120 / IAM 13836 / NRRL 3357 / JCM 12722 / SRRC 167)).